Here is a 371-residue protein sequence, read N- to C-terminus: Protein RecA (371 aa).

75–82 (GPESSGKT) contacts ATP. The interval 343-371 (KAKDEPIADEDQPIDVVPNFDDQDVEPQN) is disordered.

The protein belongs to the RecA family.

It localises to the cytoplasm. Its function is as follows. Can catalyze the hydrolysis of ATP in the presence of single-stranded DNA, the ATP-dependent uptake of single-stranded DNA by duplex DNA, and the ATP-dependent hybridization of homologous single-stranded DNAs. It interacts with LexA causing its activation and leading to its autocatalytic cleavage. In Corynebacterium urealyticum (strain ATCC 43042 / DSM 7109), this protein is Protein RecA.